The primary structure comprises 810 residues: Exocyst complex component 6B (810 aa).

Residues 79–118 adopt a coiled-coil conformation; sequence TELLKVRGEAQKLKNQVTDTNRKLQHEGKELVIAMEELKQ. The segment at 258-282 is disordered; sequence ESTSPKSEQDSGILDVEDEEDDEEV. The span at 272-282 shows a compositional bias: acidic residues; sequence DVEDEEDDEEV.

Belongs to the SEC15 family. In terms of assembly, the exocyst complex is composed of SEC3, SEC5, SEC6, SEC8, SEC10, SEC15, EXO70 and EXO84.

Its function is as follows. Component of the exocyst complex involved in the docking of exocytic vesicles with fusion sites on the plasma membrane. In Mus musculus (Mouse), this protein is Exocyst complex component 6B (Exoc6b).